A 169-amino-acid polypeptide reads, in one-letter code: Metallopeptidase ImmA (169 aa).

Histidine 75 serves as a coordination point for Zn(2+). Glutamate 76 is a catalytic residue. Position 79 (histidine 79) interacts with Zn(2+).

As to quaternary structure, interacts with ImmR.

Involved in the regulation of horizontal gene transfer through the integrative and conjugative element ICEBs1. Required for degradation of the ICEBs1 repressor protein ImmR/YdcN. The chain is Metallopeptidase ImmA (immA) from Bacillus subtilis (strain 168).